The chain runs to 196 residues: HTH-type transcriptional regulator EcpR (196 aa).

Residues 138 to 196 (KDIKKDKITDREMEIIRMTAQGMLPKSIARIENCSVKTVYTHRRNAEAKLYSKLYKLVQ) form the HTH luxR-type domain. The segment at residues 162–181 (PKSIARIENCSVKTVYTHRR) is a DNA-binding region (H-T-H motif).

This sequence belongs to the EcpR/MatA family.

It localises to the cytoplasm. In terms of biological role, part of the ecpRABCDE operon, which encodes the E.coli common pilus (ECP). ECP is found in both commensal and pathogenic strains and plays a dual role in early-stage biofilm development and host cell recognition. Positively regulates the expression of the ecp operon by binding to two TTCCT boxes. The sequence is that of HTH-type transcriptional regulator EcpR (ecpR) from Escherichia coli O157:H7.